We begin with the raw amino-acid sequence, 249 residues long: Putative adhesin RC1281 (249 aa).

The first 22 residues, 1–22 (MKKLLLIAAASTALLTSGLSFA), serve as a signal peptide directing secretion.

Adheres to biotinylated epithelial (Vero cell) proteins. This Rickettsia conorii (strain ATCC VR-613 / Malish 7) protein is Putative adhesin RC1281.